Consider the following 428-residue polypeptide: 3-phosphoshikimate 1-carboxyvinyltransferase (428 aa).

Positions 21, 22, and 26 each coordinate 3-phosphoshikimate. Residue K21 coordinates phosphoenolpyruvate. Phosphoenolpyruvate is bound by residues G93 and R121. 3-phosphoshikimate is bound by residues S166, Q168, D314, and K341. Residue Q168 coordinates phosphoenolpyruvate. Residue D314 is the Proton acceptor of the active site. The phosphoenolpyruvate site is built by R345 and R388.

Belongs to the EPSP synthase family. In terms of assembly, monomer.

The protein resides in the cytoplasm. It carries out the reaction 3-phosphoshikimate + phosphoenolpyruvate = 5-O-(1-carboxyvinyl)-3-phosphoshikimate + phosphate. Its pathway is metabolic intermediate biosynthesis; chorismate biosynthesis; chorismate from D-erythrose 4-phosphate and phosphoenolpyruvate: step 6/7. Catalyzes the transfer of the enolpyruvyl moiety of phosphoenolpyruvate (PEP) to the 5-hydroxyl of shikimate-3-phosphate (S3P) to produce enolpyruvyl shikimate-3-phosphate and inorganic phosphate. This Syntrophomonas wolfei subsp. wolfei (strain DSM 2245B / Goettingen) protein is 3-phosphoshikimate 1-carboxyvinyltransferase.